The primary structure comprises 29 residues: ATP synthase subunit 9, mitochondrial (29 aa).

It belongs to the ATPase C chain family. F-type ATPases have 2 components, CF(1) - the catalytic core - and CF(0) - the membrane proton channel. CF(1) has five subunits: alpha(3), beta(3), gamma(1), delta(1), epsilon(1). CF(0) has three main subunits: a, b and c.

Its subcellular location is the mitochondrion membrane. Functionally, mitochondrial membrane ATP synthase (F(1)F(0) ATP synthase or Complex V) produces ATP from ADP in the presence of a proton gradient across the membrane which is generated by electron transport complexes of the respiratory chain. F-type ATPases consist of two structural domains, F(1) - containing the extramembraneous catalytic core and F(0) - containing the membrane proton channel, linked together by a central stalk and a peripheral stalk. During catalysis, ATP synthesis in the catalytic domain of F(1) is coupled via a rotary mechanism of the central stalk subunits to proton translocation. Part of the complex F(0) domain. A homomeric c-ring of probably 10 subunits is part of the complex rotary element. In Wickerhamomyces pijperi (Yeast), this protein is ATP synthase subunit 9, mitochondrial (ATP9).